A 101-amino-acid chain; its full sequence is Small ribosomal subunit protein uS14 (101 aa).

It belongs to the universal ribosomal protein uS14 family. Part of the 30S ribosomal subunit. Contacts proteins S3 and S10.

Its function is as follows. Binds 16S rRNA, required for the assembly of 30S particles and may also be responsible for determining the conformation of the 16S rRNA at the A site. The chain is Small ribosomal subunit protein uS14 from Roseobacter denitrificans (strain ATCC 33942 / OCh 114) (Erythrobacter sp. (strain OCh 114)).